Here is a 354-residue protein sequence, read N- to C-terminus: Nicotinate-nucleotide--dimethylbenzimidazole phosphoribosyltransferase (354 aa).

The active-site Proton acceptor is glutamate 322.

Belongs to the CobT family.

The catalysed reaction is 5,6-dimethylbenzimidazole + nicotinate beta-D-ribonucleotide = alpha-ribazole 5'-phosphate + nicotinate + H(+). It functions in the pathway nucleoside biosynthesis; alpha-ribazole biosynthesis; alpha-ribazole from 5,6-dimethylbenzimidazole: step 1/2. Catalyzes the synthesis of alpha-ribazole-5'-phosphate from nicotinate mononucleotide (NAMN) and 5,6-dimethylbenzimidazole (DMB). This chain is Nicotinate-nucleotide--dimethylbenzimidazole phosphoribosyltransferase, found in Solidesulfovibrio magneticus (strain ATCC 700980 / DSM 13731 / RS-1) (Desulfovibrio magneticus).